We begin with the raw amino-acid sequence, 435 residues long: 5-methylthioadenosine/S-adenosylhomocysteine deaminase (435 aa).

Zn(2+)-binding residues include H65 and H67. 3 residues coordinate substrate: E94, R150, and H189. H216 is a binding site for Zn(2+). E219 and D304 together coordinate substrate. Residue D304 coordinates Zn(2+).

This sequence belongs to the metallo-dependent hydrolases superfamily. MTA/SAH deaminase family. Zn(2+) is required as a cofactor.

The catalysed reaction is S-adenosyl-L-homocysteine + H2O + H(+) = S-inosyl-L-homocysteine + NH4(+). It catalyses the reaction S-methyl-5'-thioadenosine + H2O + H(+) = S-methyl-5'-thioinosine + NH4(+). Functionally, catalyzes the deamination of 5-methylthioadenosine and S-adenosyl-L-homocysteine into 5-methylthioinosine and S-inosyl-L-homocysteine, respectively. Is also able to deaminate adenosine. This chain is 5-methylthioadenosine/S-adenosylhomocysteine deaminase, found in Bacillus thuringiensis (strain Al Hakam).